A 104-amino-acid chain; its full sequence is ATP synthase subunit c (104 aa).

2 consecutive transmembrane segments (helical) span residues 31–51 (SVVA…IGMG) and 75–95 (MFIA…VAMI).

Belongs to the ATPase C chain family. As to quaternary structure, F-type ATPases have 2 components, F(1) - the catalytic core - and F(0) - the membrane proton channel. F(1) has five subunits: alpha(3), beta(3), gamma(1), delta(1), epsilon(1). F(0) has three main subunits: a(1), b(2) and c(10-14). The alpha and beta chains form an alternating ring which encloses part of the gamma chain. F(1) is attached to F(0) by a central stalk formed by the gamma and epsilon chains, while a peripheral stalk is formed by the delta and b chains.

The protein resides in the cell inner membrane. F(1)F(0) ATP synthase produces ATP from ADP in the presence of a proton or sodium gradient. F-type ATPases consist of two structural domains, F(1) containing the extramembraneous catalytic core and F(0) containing the membrane proton channel, linked together by a central stalk and a peripheral stalk. During catalysis, ATP synthesis in the catalytic domain of F(1) is coupled via a rotary mechanism of the central stalk subunits to proton translocation. In terms of biological role, key component of the F(0) channel; it plays a direct role in translocation across the membrane. A homomeric c-ring of between 10-14 subunits forms the central stalk rotor element with the F(1) delta and epsilon subunits. The protein is ATP synthase subunit c of Aliarcobacter butzleri (strain RM4018) (Arcobacter butzleri).